Reading from the N-terminus, the 38-residue chain is Large ribosomal subunit protein bL36 (38 aa).

The protein belongs to the bacterial ribosomal protein bL36 family.

This is Large ribosomal subunit protein bL36 from Pseudothermotoga lettingae (strain ATCC BAA-301 / DSM 14385 / NBRC 107922 / TMO) (Thermotoga lettingae).